Here is a 174-residue protein sequence, read N- to C-terminus: Adenine phosphoribosyltransferase (174 aa).

Belongs to the purine/pyrimidine phosphoribosyltransferase family. In terms of assembly, homodimer.

The protein resides in the cytoplasm. It carries out the reaction AMP + diphosphate = 5-phospho-alpha-D-ribose 1-diphosphate + adenine. It functions in the pathway purine metabolism; AMP biosynthesis via salvage pathway; AMP from adenine: step 1/1. In terms of biological role, catalyzes a salvage reaction resulting in the formation of AMP, that is energically less costly than de novo synthesis. The protein is Adenine phosphoribosyltransferase of Phocaeicola vulgatus (strain ATCC 8482 / DSM 1447 / JCM 5826 / CCUG 4940 / NBRC 14291 / NCTC 11154) (Bacteroides vulgatus).